We begin with the raw amino-acid sequence, 486 residues long: Elastin-binding protein EbpS (486 aa).

Residues methionine 1 to threonine 40 show a composition bias toward basic and acidic residues. The tract at residues methionine 1–lysine 314 is disordered. Over serine 2–lysine 204 the chain is Extracellular. Residues glutamine 14–glutamate 34 form an elastin-binding region. A compositionally biased stretch (polar residues) spans threonine 64–alanine 85. Basic and acidic residues-rich tracts occupy residues glutamate 103–tyrosine 118, aspartate 126–alanine 160, and serine 180–histidine 199. 2 stretches are compositionally biased toward low complexity: residues lysine 204–serine 225 and aspartate 233–serine 246. A helical transmembrane segment spans residues glycine 205–serine 225. The Cytoplasmic portion of the chain corresponds to lysine 226–lysine 319. Over residues threonine 247–histidine 259 the composition is skewed to basic and acidic residues. A compositionally biased stretch (low complexity) spans glycine 278–serine 297. Over residues asparagine 299–lysine 314 the composition is skewed to basic and acidic residues. Residues valine 320 to methionine 340 form a helical membrane-spanning segment. The Extracellular portion of the chain corresponds to alanine 341–proline 486. The tract at residues glutamate 351–threonine 440 is disordered. Residues asparagine 361 to glutamate 398 are compositionally biased toward basic and acidic residues. Positions glutamine 403–glutamine 431 are enriched in low complexity. The LysM domain occupies glutamine 437–isoleucine 485.

Its subcellular location is the cell membrane. Its function is as follows. Promotes binding of soluble elastin peptides and tropoelastin to S.aureus cells although it is not able to promote bacterial adherence to immobilized elastin and, therefore, is not a microbial surface component recognizing adhesive matrix molecule (MSCRAMM). This chain is Elastin-binding protein EbpS (ebpS), found in Staphylococcus aureus (strain MSSA476).